Consider the following 114-residue polypeptide: Large ribosomal subunit protein uL22 (114 aa).

It belongs to the universal ribosomal protein uL22 family. In terms of assembly, part of the 50S ribosomal subunit.

Functionally, this protein binds specifically to 23S rRNA; its binding is stimulated by other ribosomal proteins, e.g. L4, L17, and L20. It is important during the early stages of 50S assembly. It makes multiple contacts with different domains of the 23S rRNA in the assembled 50S subunit and ribosome. In terms of biological role, the globular domain of the protein is located near the polypeptide exit tunnel on the outside of the subunit, while an extended beta-hairpin is found that lines the wall of the exit tunnel in the center of the 70S ribosome. The sequence is that of Large ribosomal subunit protein uL22 from Aeromonas salmonicida (strain A449).